A 257-amino-acid polypeptide reads, in one-letter code: Melatonin receptor type 1A (257 aa).

The Extracellular portion of the chain corresponds to 5–22; sequence LASIVNDGWSLSSLHCQL. Residues Cys20 and Cys97 are joined by a disulfide bond. The chain crosses the membrane as a helical span at residues 23–43; it reads SGFLMGLSVIGSVFNITGIAI. Residues 44-64 lie on the Cytoplasmic side of the membrane; it reads NRYCCICHSLRYNKLYSSTNS. Residues 65–85 traverse the membrane as a helical segment; that stretch reads LCYVFLIWMLTLVAIVPNLCV. At 86 to 107 the chain is on the extracellular side; that stretch reads GTLQYDPRIYSCTFTQSVSSAY. Residues 108–128 traverse the membrane as a helical segment; sequence TIAVVVFHFIVPMLVVIFCYL. Residues 129 to 160 are Cytoplasmic-facing; sequence RIWALVLQVRWRVKPDNKPKLKPQDFRNFVTM. Residues 161–181 form a helical membrane-spanning segment; it reads FVVFVLFAICWAPLNFIGLVV. Residues 182 to 194 lie on the Extracellular side of the membrane; the sequence is ASEPASMAPRIPE. A helical membrane pass occupies residues 195–215; it reads WLFVASYYMGYFNSCLNAIIY. Topologically, residues 216–257 are cytoplasmic; it reads GLLNQNFRQEYRKIIVSLCTTKMFFVDSSNHVAHRIKRKPSP.

Belongs to the G-protein coupled receptor 1 family.

The protein resides in the cell membrane. Its function is as follows. High affinity receptor for melatonin. Likely to mediate the reproductive and circadian actions of melatonin. The activity of this receptor is mediated by pertussis toxin sensitive G proteins that inhibit adenylate cyclase activity. Possibly involved in sleep induction, by melatonin activation of the potassium channel KCNMA1/BK and the dissociation of G-beta and G-gamma subunits, thereby decreasing synaptic transmission. This Bos taurus (Bovine) protein is Melatonin receptor type 1A (MTNR1A).